Reading from the N-terminus, the 349-residue chain is Anthranilate phosphoribosyltransferase (349 aa).

5-phospho-alpha-D-ribose 1-diphosphate contacts are provided by residues glycine 82, 85-86 (GD), 92-95 (NVSS), 110-118 (KHGNRAVSG), and serine 122. Residue glycine 82 participates in anthranilate binding. Mg(2+) is bound at residue serine 94. Asparagine 113 is a binding site for anthranilate. Arginine 168 lines the anthranilate pocket. Residues aspartate 227 and glutamate 228 each coordinate Mg(2+).

This sequence belongs to the anthranilate phosphoribosyltransferase family. As to quaternary structure, homodimer. Mg(2+) serves as cofactor.

The catalysed reaction is N-(5-phospho-beta-D-ribosyl)anthranilate + diphosphate = 5-phospho-alpha-D-ribose 1-diphosphate + anthranilate. It functions in the pathway amino-acid biosynthesis; L-tryptophan biosynthesis; L-tryptophan from chorismate: step 2/5. Its function is as follows. Catalyzes the transfer of the phosphoribosyl group of 5-phosphorylribose-1-pyrophosphate (PRPP) to anthranilate to yield N-(5'-phosphoribosyl)-anthranilate (PRA). This chain is Anthranilate phosphoribosyltransferase, found in Pseudomonas paraeruginosa (strain DSM 24068 / PA7) (Pseudomonas aeruginosa (strain PA7)).